The primary structure comprises 249 residues: Mannose-binding protein A (249 aa).

The N-terminal stretch at 1-20 (MLLFSSLPVLLLCVVTASYS) is a signal peptide. A disordered region spans residues 41–102 (VTNGTPGRDG…KGDPGDTSGV (62 aa)). Positions 48–60 (RDGRDGPKGEKGE) are enriched in basic and acidic residues. Residue Pro-54 is modified to 4-hydroxyproline. 5-hydroxylysine is present on residues Lys-55 and Lys-58. Lys-55 and Lys-58 each carry an O-linked (Gal...) hydroxylysine glycan. 4-hydroxyproline is present on residues Pro-61, Pro-72, Pro-78, and Pro-89. Residues 64 to 98 (GFRGSQGPPGKMGPPGNIGETGPLGPKGQKGDPGD) form the Collagen-like domain. 2 positions are modified to 5-hydroxylysine: Lys-90 and Lys-93. Residues Lys-90 and Lys-93 are each glycosylated (O-linked (Gal...) hydroxylysine). The 112-residue stretch at 135 to 246 (SRKKLYVTNG…CSSSFLAVCE (112 aa)) folds into the C-type lectin domain. Cystine bridges form between Cys-156–Cys-245 and Cys-223–Cys-237. Residues Asp-189, Glu-193, Glu-213, Asn-215, Asp-216, Glu-221, Asp-222, Asn-233, and Asp-234 each contribute to the Ca(2+) site. Residues 213-221 (EPNDHGSGE) form a calcium-dependent carbohydrate binding region.

In terms of assembly, interacts with MASP1 and MASP2. Forms oligomeric complexes of 3, 4, 5 or, predominantly, 6 homotrimers. The homotrimers appear as globular heads that are connected to a central hub by thin stalks. In terms of processing, hydroxylated on lysine and proline residues within the collagen-like domain. O-glycosylated. O-linked glycans on hydroxylysine residues consist of Glc-Gal disaccharides bound to the oxygen atom of post-translationally added hydroxyl groups. In terms of tissue distribution, detected in blood serum (at protein level). Expressed in liver. Weakly expressed in lung, testis and brain. Not detected in bone marrow and heart.

Its subcellular location is the secreted. In terms of biological role, calcium-dependent lectin. Plays a role in the innate immune response by binding mannose, fucose and N-acetylglucosamine on bacteria, including strains of A.suis, H.parasuis and A.pleuropneumoniae, and activates the lectin complement pathway. According to some authors, it only binds mannose. The polypeptide is Mannose-binding protein A (Sus scrofa (Pig)).